Reading from the N-terminus, the 128-residue chain is Large-conductance mechanosensitive channel (128 aa).

A run of 2 helical transmembrane segments spans residues 11 to 31 (FALK…AAFG) and 70 to 90 (GAFI…FIFV).

This sequence belongs to the MscL family. In terms of assembly, homopentamer.

The protein localises to the cell membrane. Its function is as follows. Channel that opens in response to stretch forces in the membrane lipid bilayer. May participate in the regulation of osmotic pressure changes within the cell. This Listeria monocytogenes serotype 4a (strain HCC23) protein is Large-conductance mechanosensitive channel.